Here is a 369-residue protein sequence, read N- to C-terminus: 3-dehydroquinate synthase (369 aa).

Residues 110 to 114, 134 to 135, K147, K156, and 174 to 177 each bind NAD(+); these read GVIGD, TT, and TLKT. Residues E189, H254, and H271 each contribute to the Zn(2+) site.

This sequence belongs to the sugar phosphate cyclases superfamily. Dehydroquinate synthase family. Requires Co(2+) as cofactor. Zn(2+) serves as cofactor. NAD(+) is required as a cofactor.

The protein localises to the cytoplasm. The enzyme catalyses 7-phospho-2-dehydro-3-deoxy-D-arabino-heptonate = 3-dehydroquinate + phosphate. It functions in the pathway metabolic intermediate biosynthesis; chorismate biosynthesis; chorismate from D-erythrose 4-phosphate and phosphoenolpyruvate: step 2/7. Its function is as follows. Catalyzes the conversion of 3-deoxy-D-arabino-heptulosonate 7-phosphate (DAHP) to dehydroquinate (DHQ). The polypeptide is 3-dehydroquinate synthase (Cyanothece sp. (strain PCC 7425 / ATCC 29141)).